The sequence spans 82 residues: Ubiquinol-cytochrome-c reductase complex assembly factor 3 (82 aa).

Over 1-6 (METVRR) the chain is Mitochondrial matrix. A helical transmembrane segment spans residues 7 to 29 (IVKGTLLLGFCTGIGGDLWVLVA). Residues 30 to 82 (PGQERRLEMRMNYPEANPPMLAEAHKRNEMVLKVIEESAKTNENMARRSPWSS) are Mitochondrial intermembrane-facing.

Belongs to the UQCC3 family. In terms of assembly, associates with the ubiquinol-cytochrome c reductase complex (mitochondrial respiratory chain complex III or cytochrome b-c1 complex).

Its subcellular location is the mitochondrion inner membrane. In terms of biological role, required for the assembly of the ubiquinol-cytochrome c reductase complex (mitochondrial respiratory chain complex III or cytochrome b-c1 complex), mediating cytochrome b recruitment and probably stabilization within the complex. Thereby, plays an important role in ATP production by mitochondria. Cardiolipin-binding protein, it may also control the cardiolipin composition of mitochondria membranes and their morphology. This is Ubiquinol-cytochrome-c reductase complex assembly factor 3 from Xenopus laevis (African clawed frog).